A 471-amino-acid polypeptide reads, in one-letter code: MEYLPLFAQLKQRPVLVVGGGEVALRKIALLRRAGACVSVVAKKLHPELAALEQEGALRWLAQSFEPAQLDAVFLVIAATSDAALNRRVFDEANARQRLVNVVDDQPLCSFIFPSIVDRSPLIVAISSSGNAPVLARLLREKIESLLPASLGRMAEVAGGFRDRIKARIPTTDGRRRFWEKAFRGRFASLMAAGDTRAAEAVLEAELDAPQGPQGEIILVGAGPGDAGLLTLRGLQVMQQADVVLYDHLVSDGVLDLVRRDADRICVGKRAGAHAVAQHETNQMLIDFAREGKTVVRLKGGDPFIFGRGGEELEAAKAAGVPFQVVPGVTAASGATAYAGIPLTHRDYAQSAVFVTGHYKPDSEPFDWALLAKSRQTLAIYMGTMKAAEISQQLIAHGRDATTPVAVISRGTREDQRVLTGTLDTLNILAKDAPMPALLVVGEVVQLHQQLAWFQHSTDAENLRSSVVNLA.

The precorrin-2 dehydrogenase /sirohydrochlorin ferrochelatase stretch occupies residues 1–203 (MEYLPLFAQL…GDTRAAEAVL (203 aa)). NAD(+) is bound by residues 22–23 (EV) and 43–44 (KK). Residue Ser128 is modified to Phosphoserine. Residues 215 to 471 (GEIILVGAGP…NLRSSVVNLA (257 aa)) are uroporphyrinogen-III C-methyltransferase. Pro224 lines the S-adenosyl-L-methionine pocket. Asp247 serves as the catalytic Proton acceptor. The active-site Proton donor is the Lys269. Residues 300–302 (GGD), Ile305, 330–331 (TA), Met382, and Gly411 each bind S-adenosyl-L-methionine.

It in the N-terminal section; belongs to the precorrin-2 dehydrogenase / sirohydrochlorin ferrochelatase family. In the C-terminal section; belongs to the precorrin methyltransferase family.

It catalyses the reaction uroporphyrinogen III + 2 S-adenosyl-L-methionine = precorrin-2 + 2 S-adenosyl-L-homocysteine + H(+). The enzyme catalyses precorrin-2 + NAD(+) = sirohydrochlorin + NADH + 2 H(+). It carries out the reaction siroheme + 2 H(+) = sirohydrochlorin + Fe(2+). Its pathway is cofactor biosynthesis; adenosylcobalamin biosynthesis; precorrin-2 from uroporphyrinogen III: step 1/1. It participates in cofactor biosynthesis; adenosylcobalamin biosynthesis; sirohydrochlorin from precorrin-2: step 1/1. It functions in the pathway porphyrin-containing compound metabolism; siroheme biosynthesis; precorrin-2 from uroporphyrinogen III: step 1/1. The protein operates within porphyrin-containing compound metabolism; siroheme biosynthesis; siroheme from sirohydrochlorin: step 1/1. Its pathway is porphyrin-containing compound metabolism; siroheme biosynthesis; sirohydrochlorin from precorrin-2: step 1/1. Its function is as follows. Multifunctional enzyme that catalyzes the SAM-dependent methylations of uroporphyrinogen III at position C-2 and C-7 to form precorrin-2 via precorrin-1. Then it catalyzes the NAD-dependent ring dehydrogenation of precorrin-2 to yield sirohydrochlorin. Finally, it catalyzes the ferrochelation of sirohydrochlorin to yield siroheme. The chain is Siroheme synthase 1 from Cronobacter sakazakii (strain ATCC BAA-894) (Enterobacter sakazakii).